The sequence spans 210 residues: Helix-loop-helix protein 26 (210 aa).

Residues 1 to 15 are compositionally biased toward low complexity; it reads MSSSPTSSSSGSPSS. A disordered region spans residues 1–33; sequence MSSSPTSSSSGSPSSHGHRSETEKQRRDDTNDL. One can recognise a bHLH domain in the interval 14-65; it reads SSHGHRSETEKQRRDDTNDLLNEFKKIVQKSESEKLSKEEVLFRIVKLLSGI. Residues 18 to 33 are compositionally biased toward basic and acidic residues; that stretch reads HRSETEKQRRDDTNDL.

In terms of assembly, homodimer; binds to DNA as a homodimer. In terms of tissue distribution, expressed in intestinal cells (at protein level).

It localises to the nucleus. As a homodimer binds DNA via the E-box sequence 5'-CACGTG-3'. Represses lag-2 transcription during embryogenesis via Notch signaling, in an unc-37-dependent manner. Also represses tbx-37 independent of Notch signaling. In the intestine, plays a role in probiotic-mediated protection against infections by pathogens such as S.enterica. This is most likely by positively regulating the expression of genes such as bar-1 upon exposure to probiotic bacteria such as the E.faecium. The protein is Helix-loop-helix protein 26 of Caenorhabditis elegans.